A 151-amino-acid chain; its full sequence is Large ribosomal subunit protein uL15 (151 aa).

Residues 1-51 (MKSLRLEDAVPQSGSRHRKLRVGRGHSAGQGKTSGRGMRGQKCRSGGGVRP) are disordered. A compositionally biased stretch (basic residues) spans 15 to 24 (SRHRKLRVGR). Over residues 26–38 (HSAGQGKTSGRGM) the composition is skewed to gly residues.

Belongs to the universal ribosomal protein uL15 family. In terms of assembly, part of the 50S ribosomal subunit.

Its function is as follows. Binds to the 23S rRNA. The polypeptide is Large ribosomal subunit protein uL15 (Gloeobacter violaceus (strain ATCC 29082 / PCC 7421)).